The chain runs to 245 residues: MKALIGIGLCAALLGGCAALPGRDGPRECSQQLGQEQELQMNMVRDMIREGRLHAALANLESMPPGLLDVREERALILRRIGDPRARAEYQALLETCKAPEAHHGLGLLALRNGDSARAVLELREAARLRPTESRFRNDLGVALLKRGDRVGARFEFITALELQQGGKLPATNLLGLLYLQGDREDAQRLIERLQLDARDIRAAEARARSWGAVPTPGAAPASDDPLAELPAEANMHTAMANEAP.

The first 16 residues, 1–16 (MKALIGIGLCAALLGG), serve as a signal peptide directing secretion. Cys-17 is lipidated: N-palmitoyl cysteine. Cys-17 carries S-diacylglycerol cysteine lipidation. TPR repeat units follow at residues 100-133 (PEAHHGLGLLALRNGDSARAVLELREAARLRPTE), 135-167 (RFRNDLGVALLKRGDRVGARFEFITALELQQGG), and 169-200 (LPATNLLGLLYLQGDREDAQRLIERLQLDARD). The disordered stretch occupies residues 210-245 (SWGAVPTPGAAPASDDPLAELPAEANMHTAMANEAP).

Its subcellular location is the cell membrane. The chain is TPR repeat-containing protein PA4299 from Pseudomonas aeruginosa (strain ATCC 15692 / DSM 22644 / CIP 104116 / JCM 14847 / LMG 12228 / 1C / PRS 101 / PAO1).